A 79-amino-acid polypeptide reads, in one-letter code: Acyl carrier protein (79 aa).

The region spanning 2–77 (SDIEQRVKKI…QAIDYAKAHV (76 aa)) is the Carrier domain. Ser37 carries the post-translational modification O-(pantetheine 4'-phosphoryl)serine.

Belongs to the acyl carrier protein (ACP) family. Post-translationally, 4'-phosphopantetheine is transferred from CoA to a specific serine of apo-ACP by AcpS. This modification is essential for activity because fatty acids are bound in thioester linkage to the sulfhydryl of the prosthetic group.

It localises to the cytoplasm. It functions in the pathway lipid metabolism; fatty acid biosynthesis. Functionally, carrier of the growing fatty acid chain in fatty acid biosynthesis. This chain is Acyl carrier protein, found in Janthinobacterium sp. (strain Marseille) (Minibacterium massiliensis).